Consider the following 273-residue polypeptide: Dermonecrotic toxin SdSicTox-betaIF1 (273 aa).

Residue His5 is part of the active site. Mg(2+) is bound by residues Glu25 and Asp27. Catalysis depends on His41, which acts as the Nucleophile. 2 disulfide bridges follow: Cys45–Cys51 and Cys47–Cys189.

The protein belongs to the arthropod phospholipase D family. Class II subfamily. Mg(2+) serves as cofactor. As to expression, expressed by the venom gland.

It is found in the secreted. The catalysed reaction is an N-(acyl)-sphingosylphosphocholine = an N-(acyl)-sphingosyl-1,3-cyclic phosphate + choline. The enzyme catalyses an N-(acyl)-sphingosylphosphoethanolamine = an N-(acyl)-sphingosyl-1,3-cyclic phosphate + ethanolamine. It carries out the reaction a 1-acyl-sn-glycero-3-phosphocholine = a 1-acyl-sn-glycero-2,3-cyclic phosphate + choline. It catalyses the reaction a 1-acyl-sn-glycero-3-phosphoethanolamine = a 1-acyl-sn-glycero-2,3-cyclic phosphate + ethanolamine. Functionally, dermonecrotic toxins cleave the phosphodiester linkage between the phosphate and headgroup of certain phospholipids (sphingolipid and lysolipid substrates), forming an alcohol (often choline) and a cyclic phosphate. This toxin acts on sphingomyelin (SM). It may also act on ceramide phosphoethanolamine (CPE), lysophosphatidylcholine (LPC) and lysophosphatidylethanolamine (LPE), but not on lysophosphatidylserine (LPS), and lysophosphatidylglycerol (LPG). It acts by transphosphatidylation, releasing exclusively cyclic phosphate products as second products. Induces dermonecrosis, hemolysis, increased vascular permeability, edema, inflammatory response, and platelet aggregation. This Sicarius cf. damarensis (strain GJB-2008) (Six-eyed sand spider) protein is Dermonecrotic toxin SdSicTox-betaIF1.